An 88-amino-acid polypeptide reads, in one-letter code: Alpha-conotoxin GVIIIB (88 aa).

A signal peptide spans 1 to 20 (MMSKMGAMFVLLLLFTLASS). A propeptide spanning residues 21–43 (QQEGDVQARKTRPKSDFYRALPR) is cleaved from the precursor. Thr-87 carries the threonine amide modification.

Belongs to the conotoxin S superfamily. In terms of processing, contains 5 disulfide bonds. The predominant peptide contains 2 hydroxyprolines, while 2 minor peptides contains 1 and 3 hydroxyprolines. As to expression, expressed by the venom duct.

The protein localises to the secreted. Functionally, alpha-conotoxins act on postsynaptic membranes, they bind to the nicotinic acetylcholine receptors (nAChR) and thus inhibit them. This toxin shows high activity on alpha-9-alpha-10 (CHRNA9-CHRNA10) (IC(50)=9.79 nM). It also shows weak activity on alpha-3-beta-2 (CHRNA3-CHRNB2) (IC(50)~1 uM), alpha-6/alpha-3-beta-2-beta-3 (CHRNA6/CHRNA3-CHRNB2-CHRNB3) (IC(50)~1 uM). The toxin binds to the same or overlapping binding sites than conotoxin RgIA (AC P0C1D0). The sequence is that of Alpha-conotoxin GVIIIB from Conus geographus (Geography cone).